Reading from the N-terminus, the 144-residue chain is Actin-associated protein FAM107A (144 aa).

Positions 66 to 112 (ELQRVLEHRRRNQLIKKKKEELEAKRLQCPFEQELLRRQQRLNQLEK) form a coiled coil. The Nuclear localization signal motif lies at 74–84 (RRRNQLIKKKK). Residues 105–124 (QRLNQLEKPPEKEEDHAPEF) form a disordered region. A compositionally biased stretch (basic and acidic residues) spans 112–124 (KPPEKEEDHAPEF).

This sequence belongs to the FAM107 family. In terms of assembly, interacts with ACTB. Interacts with COMMD1; this interaction stabilizes COMMD1 in the nucleus. Interacts with MAP1A. Interacts with PRDX1. Interacts with F-actin. As to expression, widely expressed. Expressed in neurons. Expressed in malignant glial tumors. Expression is reduced or absent in a number of cancer cell lines.

It is found in the nucleus. The protein localises to the cytoplasm. It localises to the cytoskeleton. The protein resides in the stress fiber. Its subcellular location is the cell junction. It is found in the focal adhesion. The protein localises to the cell projection. It localises to the ruffle membrane. The protein resides in the synapse. In terms of biological role, stress-inducible actin-binding protein that plays a role in synaptic and cognitive functions by modulating actin filamentous (F-actin) dynamics. Mediates polymerization of globular actin to F-actin. Also binds to, stabilizes and bundles F-actin. Involved in synaptic function by regulating neurite outgrowth in an actin-dependent manner and for the acquisition of hippocampus-dependent cognitive function, such as learning and long-term memory. Plays a role in the actin and microtubule cytoskeleton organization; negatively regulates focal adhesion (FA) assembly promoting malignant glial cell migration in an actin-, microtubule- and MAP1A-dependent manner. Also involved in neuroblastoma G1/S phase cell cycle progression and cell proliferation inhibition by stimulating ubiquitination of NF-kappa-B subunit RELA and NF-kappa-B degradation in a COMMD1- and actin-dependent manner. May play a role in tumor development. This chain is Actin-associated protein FAM107A, found in Homo sapiens (Human).